The primary structure comprises 799 residues: MMLNLVVADGPRQLSAREKAAKLKKSGLSFAQRKALREEEKKNAWKKEQGGITTTIEDRMKRREQDNPPVRPKPYDKPYEKKPYEKKPFEKKPYEKKSYDKPVASKPVEETDEEKYQRLMEGGKRPEKERWVPQRNFRNRRDMEKAGKDQSQDATPKHHDRDVIGTREDGSLIRRIREKTGAKGGIKGTYVSSIFSEKKEDRIAGEDVQMEDEEEEEAENNAESSNAALKDSTTFSGLGCSQRLVDALVGMQLAKPTKIQRATIPRLIQRERDLFVQAQTGSGKTLAFVLPVLERIMSCDDVSRETGLFAVILTPTRELTTQIYSVLETLCRKACPWIVPGIVIGGEKKKSEKARIRKGVNILVATPGRLADHFDNTEALDLSQVRWVVLDEGDRLMELGFEETITKILRTIEWKSVLRGENYLKDIPKNLKPLPSRRVTVLCSATMKGGVTELGKSTLKDADWVSNDSVEDALAETSVETFSAPSQLVQEWVVVPAKLRLVTLLGALRGDILQSSEKTNTKVIVFLSCSDSVDFHFDVLSRDGSQINKMDTAKTAPLLLDDVSTSVYKLHGSLSQQARTATLASFAKNSTPSILLCTDVASRGLDLPKITHVIEYDPPFSIEDHLHRVGRTARAGQDGRALLFLLPGAEEGYVEKLKQSQQMKKTTYENILAAGFGGKGWDFAATNYHLDVERWVLGDETALDRARRGFTSHIRAYATHIAAEKDMFNVRMLHLGHLAKSFALREAPGKLGKKKDPEKIKVNKDGSLDETQARKKMLDRSRKHVYNSGESAMGGYVLE.

Disordered stretches follow at residues 34-177 and 201-229; these read KALR…RRIR and DRIA…NAAL. Basic and acidic residues-rich tracts occupy residues 35–49, 56–66, 73–100, 114–132, and 139–172; these read ALRE…KKEQ, IEDRMKRREQD, KPYD…KSYD, EKYQ…ERWV, and NRRD…DGSL. Positions 208 to 220 are enriched in acidic residues; sequence VQMEDEEEEEAEN. The Q motif signature appears at 233–261; the sequence is TTFSGLGCSQRLVDALVGMQLAKPTKIQR. A Helicase ATP-binding domain is found at 265 to 465; the sequence is PRLIQRERDL…KSTLKDADWV (201 aa). ATP is bound by residues 278–285 and 306–313; these read AQTGSGKT and TGLFAVIL. Residues 391–394 carry the DEAD box motif; that stretch reads DEGD. The region spanning 511-679 is the Helicase C-terminal domain; sequence DILQSSEKTN…NILAAGFGGK (169 aa). A disordered region spans residues 750–799; the sequence is KLGKKKDPEKIKVNKDGSLDETQARKKMLDRSRKHVYNSGESAMGGYVLE. The span at 754 to 780 shows a compositional bias: basic and acidic residues; sequence KKDPEKIKVNKDGSLDETQARKKMLDR.

Belongs to the DEAD box helicase family. DDX31/DBP7 subfamily.

The protein resides in the nucleus. Its subcellular location is the nucleolus. The catalysed reaction is ATP + H2O = ADP + phosphate + H(+). ATP-binding RNA helicase involved in the biogenesis of 60S ribosomal subunits and is required for the normal formation of 25S and 5.8S rRNAs. In Yarrowia lipolytica (strain CLIB 122 / E 150) (Yeast), this protein is ATP-dependent RNA helicase DBP7 (DBP7).